The following is a 275-amino-acid chain: Ribosomal RNA small subunit methyltransferase A (275 aa).

S-adenosyl-L-methionine is bound by residues N21, L23, G48, E69, D94, and N115.

It belongs to the class I-like SAM-binding methyltransferase superfamily. rRNA adenine N(6)-methyltransferase family. RsmA subfamily.

It is found in the cytoplasm. It catalyses the reaction adenosine(1518)/adenosine(1519) in 16S rRNA + 4 S-adenosyl-L-methionine = N(6)-dimethyladenosine(1518)/N(6)-dimethyladenosine(1519) in 16S rRNA + 4 S-adenosyl-L-homocysteine + 4 H(+). Functionally, specifically dimethylates two adjacent adenosines (A1518 and A1519) in the loop of a conserved hairpin near the 3'-end of 16S rRNA in the 30S particle. May play a critical role in biogenesis of 30S subunits. The chain is Ribosomal RNA small subunit methyltransferase A from Clostridium botulinum (strain ATCC 19397 / Type A).